Here is an 84-residue protein sequence, read N- to C-terminus: UPF0248 protein PF1300 (84 aa).

It belongs to the UPF0248 family.

The protein is UPF0248 protein PF1300 of Pyrococcus furiosus (strain ATCC 43587 / DSM 3638 / JCM 8422 / Vc1).